Reading from the N-terminus, the 294-residue chain is Tryptophan 2,3-dioxygenase 1 (294 aa).

Residues 1–20 (MSEPIQPTRPAASGCPMHGA) form a disordered region. Substrate is bound by residues 63–67 (FIVQH), Tyr-125, and Arg-129. Residue His-252 participates in heme binding. A substrate-binding site is contributed by Thr-266.

This sequence belongs to the tryptophan 2,3-dioxygenase family. Homotetramer. It depends on heme as a cofactor.

It catalyses the reaction L-tryptophan + O2 = N-formyl-L-kynurenine. The protein operates within amino-acid degradation; L-tryptophan degradation via kynurenine pathway; L-kynurenine from L-tryptophan: step 1/2. Functionally, heme-dependent dioxygenase that catalyzes the oxidative cleavage of the L-tryptophan (L-Trp) pyrrole ring and converts L-tryptophan to N-formyl-L-kynurenine. Catalyzes the oxidative cleavage of the indole moiety. This chain is Tryptophan 2,3-dioxygenase 1, found in Ralstonia nicotianae (strain ATCC BAA-1114 / GMI1000) (Ralstonia solanacearum).